Consider the following 65-residue polypeptide: Large ribosomal subunit protein uL29 (65 aa).

The protein belongs to the universal ribosomal protein uL29 family.

The polypeptide is Large ribosomal subunit protein uL29 (Lactobacillus helveticus (strain DPC 4571)).